The sequence spans 336 residues: Dihydroorotate dehydrogenase (quinone) (336 aa).

Residues 62–66 (AGLDK) and Thr-86 contribute to the FMN site. Lys-66 provides a ligand contact to substrate. Substrate is bound at residue 111–115 (NRMGF). The FMN site is built by Asn-139 and Asn-172. Asn-172 lines the substrate pocket. Ser-175 functions as the Nucleophile in the catalytic mechanism. Asn-177 is a binding site for substrate. Lys-217 and Thr-245 together coordinate FMN. 246 to 247 (NT) contributes to the substrate binding site. FMN contacts are provided by residues Gly-268, Gly-297, and 318 to 319 (YS).

Belongs to the dihydroorotate dehydrogenase family. Type 2 subfamily. As to quaternary structure, monomer. FMN serves as cofactor.

The protein resides in the cell membrane. It carries out the reaction (S)-dihydroorotate + a quinone = orotate + a quinol. The protein operates within pyrimidine metabolism; UMP biosynthesis via de novo pathway; orotate from (S)-dihydroorotate (quinone route): step 1/1. Functionally, catalyzes the conversion of dihydroorotate to orotate with quinone as electron acceptor. This chain is Dihydroorotate dehydrogenase (quinone), found in Salmonella gallinarum (strain 287/91 / NCTC 13346).